Here is a 1317-residue protein sequence, read N- to C-terminus: Clustered mitochondria protein homolog (1317 aa).

Residues 382–626 (DITRSQESYL…RVTPLDVTWQ (245 aa)) form the Clu domain. A compositionally biased stretch (basic and acidic residues) spans 669–689 (KAQEEAANKEQSSEVTESKEQ). 2 disordered regions span residues 669–700 (KAQE…EALD) and 939–966 (ANGV…PSRA). 3 TPR repeats span residues 1040 to 1073 (AKLY…TERT), 1082 to 1115 (ILAY…WKII), and 1124 to 1157 (ITTM…CESL). 2 disordered regions span residues 1252–1273 (VQPQ…ANAS) and 1288–1317 (GGDA…KSSA).

It belongs to the CLU family. May associate with the eukaryotic translation initiation factor 3 (eIF-3) complex.

Its subcellular location is the cytoplasm. Functionally, mRNA-binding protein involved in proper cytoplasmic distribution of mitochondria. The sequence is that of Clustered mitochondria protein homolog from Neosartorya fischeri (strain ATCC 1020 / DSM 3700 / CBS 544.65 / FGSC A1164 / JCM 1740 / NRRL 181 / WB 181) (Aspergillus fischerianus).